Here is a 291-residue protein sequence, read N- to C-terminus: Beta-lactamase CTX-M-97 (291 aa).

Positions 1–28 (MMTQSIGRSMLTVMATLPLLFSSATLHA) are cleaved as a signal peptide. Residue Ser-73 is the Acyl-ester intermediate of the active site. Position 237-239 (237-239 (KTG)) interacts with substrate.

It belongs to the class-A beta-lactamase family.

The catalysed reaction is a beta-lactam + H2O = a substituted beta-amino acid. Its function is as follows. Is probably capable of hydrolyzing cephalosporins such as ceftriaxone and ceftazidime, thus conferring resistance to these antibiotics. The chain is Beta-lactamase CTX-M-97 (bla) from Escherichia coli.